Reading from the N-terminus, the 587-residue chain is ATP-dependent lipid A-core flippase (587 aa).

5 helical membrane passes run Leu-31–Leu-51, Leu-68–Ile-88, Gly-145–Phe-165, Trp-169–Val-189, and Val-259–Ile-279. Positions Ile-32–Arg-315 constitute an ABC transmembrane type-1 domain. The ABC transporter domain maps to Leu-347–Met-583. Gly-381–Ser-388 provides a ligand contact to ATP.

This sequence belongs to the ABC transporter superfamily. Lipid exporter (TC 3.A.1.106) family. In terms of assembly, homodimer.

It is found in the cell inner membrane. It catalyses the reaction ATP + H2O + lipid A-core oligosaccharideSide 1 = ADP + phosphate + lipid A-core oligosaccharideSide 2.. Functionally, involved in lipopolysaccharide (LPS) biosynthesis. Translocates lipid A-core from the inner to the outer leaflet of the inner membrane. Transmembrane domains (TMD) form a pore in the inner membrane and the ATP-binding domain (NBD) is responsible for energy generation. The chain is ATP-dependent lipid A-core flippase from Haemophilus influenzae (strain 86-028NP).